The primary structure comprises 4558 residues: Multifunctional-autoprocessing repeats-in-toxin (4558 aa).

The signal sequence occupies residues 1–32 (MVFYLIPKRRVWLMGKPFWRSVEYFFTGNYSA). RtxA repeat units follow at residues 114 to 131 (GAAGGVSIDHLGNHGDVS), 134 to 151 (GAAAYNGITRKGLSGNVT), 154 to 170 (GAGGYNALWHETNQGNL), 174 to 197 (GAGAGNKLDRTWSNRYQGSHGDVT), 200 to 217 (GAGAANSISSRVETGNIT), 220 to 237 (GAGADNHLVRKGKVGDIT), 268 to 285 (GVGGYNSLYSDVAHGDIH), 288 to 304 (GGGAYNTIIRKGSGNDF), 594 to 611 (GAGGGNVIKSNVTRGNVH), 614 to 630 (GGGIANVILHSSQFGNT), 634 to 651 (GGGAANVIVKSGEEGDLT), 654 to 668 (GAGLANVLVHQSEQG), 751 to 763 (AGGANVLTKMGEG), 769 to 781 (MLGGANVITHISN), 792 to 808 (ALGGANILTKKGKGNTL), 811 to 826 (MGGGANVLTHVGDGTT), 830 to 845 (MVGGANILTKVGNGDT), 851 to 865 (GVGNVLTHVGDGQTL), 868 to 885 (MGAAGNIFTKVGDGTSIA), 887 to 901 (MIGAGNIFTHVGEGN), 906 to 920 (MGGLGNVFTKVGNGD), 925 to 942 (MVAEANVFTHIGDGMSVA), 944 to 960 (MLAKGNVATKVGNGTTL), 982 to 994 (MIGQANIMTKVGN), 1001 to 1016 (MVGKANIMTHVGDGTS), 1041 to 1053 (GKANIMTHVGDGL), 1077 to 1089 (AAAKANVVTHVGD), 1097 to 1112 (AGKGNILTKVGEGTTV), 1120 to 1132 (GNVMTHVGDGTTI), 1135 to 1152 (AKGKANLITKVGDGLGVN), 1155 to 1169 (WGQANVFTQVGDGDR), 1173 to 1189 (AKGEANLITKVGDGQEV), 1194 to 1209 (GEANIITHVGNGDDYT), 1211 to 1227 (AWGKANVITKVGHGQNV), 1230 to 1246 (AKGEANIVTQVGDGDSF), 1252 to 1266 (KGNIVTKVGDGMQVT), 1268 to 1285 (AKGQANITTTVGNGLNVT), 1306 to 1323 (AWGKYNINTKVGDGLNVA), and 1325 to 1342 (MKGKANANIHVGDGLNIN). Disordered regions lie at residues 1623–1688 (HATQ…KEES), 1752–1779 (TLSDNNSKVKESVAKSEAGVAQGEQNRA), and 1791–1890 (DAEK…NADG). Over residues 1625–1634 (TQNPAAQNAL) the composition is skewed to polar residues. The span at 1635–1654 (SDKERAEADRQRLEQEKQKQ) shows a compositional bias: basic and acidic residues. Residues 1660–1679 (GSQSQLESTDQQALENNGQA) show a composition bias toward polar residues. The segment covering 1791 to 1815 (DAEKRKADALAKGKDAQQAESDAHH) has biased composition (basic and acidic residues). The segment covering 1879 to 1888 (HVNTDSQTNA) has biased composition (polar residues). Residues 1988–2422 (VPGFKSHFAS…HAEQWAKITA (435 aa)) enclose the ACD domain. Residue 1999–2003 (SIGIE) coordinates ATP. Residues Glu-2003, Glu-2065, and Gln-2149 each contribute to the Mg(2+) site. Arg-2255 is a binding site for ATP. Glu-2326 contributes to the Mg(2+) binding site. Residues 2574–2658 (ELMSVTELLD…SLLNQVNTRL (85 aa)) are membrane localization region (MLD). A rho inactivation domain (RID) region spans residues 2734–3098 (EYGQTVADTI…HQVTDVLDAL (365 aa)). The interval 3195–3310 (VVLFLHGSGS…MPSMTKAITA (116 aa)) is ABH effector region. Residues 3404–3426 (ASVDEDLDQQGLDTTSTKDQGIS) form a disordered region. Polar residues predominate over residues 3414–3426 (GLDTTSTKDQGIS). The region spanning 3462-3646 (PTTDGGETRF…AENNKVSLSW (185 aa)) is the Peptidase C80 domain. Residues 3468-3470 (ETR), 3495-3496 (KH), and Arg-3526 contribute to the 1D-myo-inositol hexakisphosphate site. The active-site For cysteine protease activity is the His-3532. Ser-3577 contributes to the 1D-myo-inositol hexakisphosphate binding site. Cys-3581 acts as the Nucleophile; for cysteine protease activity in catalysis. Residues 3610–3612 (SVR), 3623–3624 (RK), Lys-3636, and Lys-3641 each bind 1D-myo-inositol hexakisphosphate.

Mg(2+) is required as a cofactor.

Its subcellular location is the secreted. The protein resides in the host cytoplasm. The protein localises to the host cytosol. It localises to the host cell membrane. The enzyme catalyses L-lysyl-/S-(2E,6E,10E)-geranylgeranyl-L-cysteinyl-[protein] + hexadecanoyl-CoA = N(6)-hexadecanoyl-L-lysyl-/S-(2E,6E,10E)-geranylgeranyl-L-cysteinyl-[protein] + CoA + H(+). The catalysed reaction is L-lysyl-/S-(2E,6E,10E)-geranylgeranyl-L-cysteinyl-[protein] + dodecanoyl-CoA = N(6)-dodecanoyl-L-lysyl-/S-(2E,6E,10E)-geranylgeranyl-L-cysteinyl-[protein] + CoA + H(+). It catalyses the reaction L-lysyl-/S-(2E,6E,10E)-geranylgeranyl-L-cysteinyl-[protein] + decanoyl-CoA = N(6)-decanoyl-L-lysyl-/S-(2E,6E,10E)-geranylgeranyl-L-cysteinyl-[protein] + CoA + H(+). Protease activity is inhibited by N-ethylmaleimide but not other protease inhibitors. Protease activity is inhibited by aza-leucine epoxide. Protease activity is activated upon binding inositol hexakisphosphate (InsP6) via an allosteric mechanism: the active site is disordered or occluded in the absence of InsP6, protecting the protease active-site sulfhydryl until the toxin enters a eukaryotic cell. Upon processing at the Leu-3441-Ala-3442 site, the peptidase C80 domain is converted to a form with much reduced affinity for InsP6, but is reactivated for high affinity binding of InsP6 by cooperative binding of both a new substrate and InsP6. Reactivation allows cleavage at other sites, specifically at Leu residues between the effector domains. Its function is as follows. Precursor of a multifunctional toxin that causes destruction of the actin cytoskeleton by covalent cross-linking of actin and inactivation of Rho GTPases when translocated into the host cytoplasm. Upon translocation into the host cell, undergoes autoprocessing in cis mediated by the peptidase C80 domain (also named CPD domain): the protease activity is activated upon binding inositol hexakisphosphate (InsP6) present at the host cell membrane and delivers the Cysteine protease domain-containing toxin F3 chain to the host cytosol. The Cysteine protease domain-containing toxin F3 chain will then further cleave and release effector toxin chains that cause disassembly of the actin cytoskeleton and enhance V.cholerae colonization of the small intestine, possibly by facilitating evasion of phagocytic cells. Following autocatalytic cleavage in cis at the Leu-3441-Ala-3442 site, this chain mediates processing in trans to release other individual toxin chains to the host cytosol. Released effector toxin chains cause disassembly of the actin cytoskeleton and enhance V.cholerae colonization of the small intestine, possibly by facilitating evasion of phagocytic cells. In terms of biological role, actin-directed toxin that catalyzes the covalent cross-linking of host cytoplasmic monomeric actin. Mediates the cross-link between 'Lys-50' of one monomer and 'Glu-270' of another actin monomer, resulting in formation of highly toxic actin oligomers that cause cell rounding. The toxin can be highly efficient at very low concentrations by acting on formin homology family proteins: toxic actin oligomers bind with high affinity to formins and adversely affect both nucleation and elongation abilities of formins, causing their potent inhibition in both profilin-dependent and independent manners. Acts as an acid--amino-acid ligase that transfers the gamma-phosphoryl group of ATP to the 'Glu-270' actin residue, resulting in the formation of an activated acyl phosphate intermediate. This intermediate is further hydrolyzed and the energy of hydrolysis is utilized for the formation of the amide bond between actin subunits. Functionally, N-epsilon-fatty acyltransferase that mediates lysine-palmitoylation of host Rho GTPase proteins, with a strong preference for host Rac1. After delivery to the host cytosol, localizes to the host cell membrane where it palmitoylates host Rho GTPase proteins, resulting in loss of all active GTP-bound Rho and subsequent actin depolymerization. Prenylation of host Rac1 at the C-terminus is required for lysine-palmitoylation. Its function is as follows. Indirectly activates the small GTPase CDC42. The chain is Multifunctional-autoprocessing repeats-in-toxin from Vibrio cholerae serotype O1 (strain ATCC 39315 / El Tor Inaba N16961).